The primary structure comprises 379 residues: Homoserine O-succinyltransferase (379 aa).

One can recognise an AB hydrolase-1 domain in the interval 51–360; it reads NAVLICHALS…DAPQGHDAFL (310 aa). Ser-157 functions as the Nucleophile in the catalytic mechanism. Residue Arg-227 coordinates substrate. Residues Asp-323 and His-356 contribute to the active site. Asp-357 lines the substrate pocket.

It belongs to the AB hydrolase superfamily. MetX family. As to quaternary structure, homodimer.

Its subcellular location is the cytoplasm. It catalyses the reaction L-homoserine + succinyl-CoA = O-succinyl-L-homoserine + CoA. It participates in amino-acid biosynthesis; L-methionine biosynthesis via de novo pathway; O-succinyl-L-homoserine from L-homoserine: step 1/1. Functionally, transfers a succinyl group from succinyl-CoA to L-homoserine, forming succinyl-L-homoserine. The polypeptide is Homoserine O-succinyltransferase (Ectopseudomonas mendocina (strain ymp) (Pseudomonas mendocina)).